Here is an 829-residue protein sequence, read N- to C-terminus: Leucine--tRNA ligase (829 aa).

Positions 34–44 (PYPSGNIHMGH) match the 'HIGH' region motif. Residues 591–595 (KMSKS) carry the 'KMSKS' region motif. K594 contributes to the ATP binding site.

It belongs to the class-I aminoacyl-tRNA synthetase family.

The protein localises to the cytoplasm. The catalysed reaction is tRNA(Leu) + L-leucine + ATP = L-leucyl-tRNA(Leu) + AMP + diphosphate. This Ehrlichia chaffeensis (strain ATCC CRL-10679 / Arkansas) protein is Leucine--tRNA ligase.